Consider the following 84-residue polypeptide: M-myrmeciitoxin-Mb2a (84 aa).

The signal sequence occupies residues 1–21; sequence MKLSCLLLTLAIIFVLTIVHA. A propeptide spanning residues 22–48 is cleaved from the precursor; it reads PNVKAKALADPESDAVGFADAVGEADP.

This sequence belongs to the formicidae venom precursor-01 superfamily. Ant pilosulin family. As to expression, expressed by the venom gland.

The protein localises to the secreted. In terms of biological role, shows activity against E.coli and S.aureus (MIC&lt;6.25 uM), moderate activity against P.aeruginosa (MIC&lt;25 uM), weak activity against B.subtilis (MIC&lt;50 uM), and has no effect against L.garvieae, C.albicans, and S.cerevisiae. Has no hemolytic nor cytolytic activity. Causes an IgE-independent histamine release. The protein is M-myrmeciitoxin-Mb2a of Myrmecia banksi (Jack jumper ant).